The sequence spans 243 residues: Thiamin pyrophosphokinase 1 (243 aa).

Belongs to the thiamine pyrophosphokinase family.

The enzyme catalyses thiamine + ATP = thiamine diphosphate + AMP + H(+). The protein operates within cofactor biosynthesis; thiamine diphosphate biosynthesis; thiamine diphosphate from thiamine: step 1/1. In terms of biological role, catalyzes the phosphorylation of thiamine to thiamine pyrophosphate. Functions cell non-autonomously. This chain is Thiamin pyrophosphokinase 1, found in Caenorhabditis elegans.